The primary structure comprises 2241 residues: Large tegument protein deneddylase (2241 aa).

The deubiquitination activity stretch occupies residues 1-238 (MKVTQASCHQ…IDLTGVVRES (238 aa)). Residues 4–226 (TQASCHQGDI…AARLVSTYRD (223 aa)) form the Peptidase C76 domain. Active-site residues include cysteine 24, aspartate 160, and histidine 162. The tract at residues 239 to 314 (ADTAATTTTA…STTSKTLATA (76 aa)) is disordered. The span at 240–250 (DTAATTTTAAP) shows a compositional bias: low complexity. A compositionally biased stretch (pro residues) spans 251-268 (SLPPLPDPIVDPGCPPGV). The span at 304–314 (PSTTSKTLATA) shows a compositional bias: low complexity. Residues 327-331 (SSAVP) form an interaction with inner tegument protein region. 2 disordered regions span residues 1187–1230 (MTET…PPAD) and 2118–2152 (PIAR…DTSR). Composition is skewed to basic and acidic residues over residues 1190-1199 (TSERLDRSLR) and 2142-2152 (QIDHAQDDTSR).

The protein belongs to the herpesviridae large tegument protein family. Interacts with host CUL1 and CUL4A; these interactions inhibit the E3 ligase activity of cullins. Interacts with inner tegument protein. Interacts with capsid vertex specific component CVC2. Interacts with the major capsid protein/MCP.

The protein resides in the virion tegument. Its subcellular location is the host cytoplasm. It is found in the host nucleus. The catalysed reaction is Thiol-dependent hydrolysis of ester, thioester, amide, peptide and isopeptide bonds formed by the C-terminal Gly of ubiquitin (a 76-residue protein attached to proteins as an intracellular targeting signal).. Functionally, large tegument protein that plays multiple roles in the viral cycle. During viral entry, remains associated with the capsid while most of the tegument is detached and participates in the capsid transport toward the host nucleus. Plays a role in the routing of the capsid at the nuclear pore complex and subsequent uncoating. Within the host nucleus, acts as a deneddylase and promotes the degradation of nuclear CRLs (cullin-RING ubiquitin ligases) and thereby stabilizes nuclear CRL substrates, while cytoplasmic CRLs remain unaffected. These modifications prevent host cell cycle S-phase progression and create a favorable environment allowing efficient viral genome replication. Participates later in the secondary envelopment of capsids. Indeed, plays a linker role for the association of the outer viral tegument to the capsids together with the inner tegument protein. This Homo sapiens (Human) protein is Large tegument protein deneddylase (UL48).